Here is a 235-residue protein sequence, read N- to C-terminus: Succinate dehydrogenase iron-sulfur subunit (235 aa).

Residues Cys-53, Cys-58, and Cys-73 each contribute to the [2Fe-2S] cluster site. In terms of domain architecture, 4Fe-4S ferredoxin-type spans 133–163 (ERAKLDGLYECILCACCSSSCPSYWWNPDKF). The [4Fe-4S] cluster site is built by Cys-143, Cys-146, and Cys-149. Cys-153 contributes to the [3Fe-4S] cluster binding site. Trp-158 is a binding site for a ubiquinone. [3Fe-4S] cluster is bound by residues Cys-200 and Cys-206. Residue Cys-210 participates in [4Fe-4S] cluster binding.

The protein belongs to the succinate dehydrogenase/fumarate reductase iron-sulfur protein family. In terms of assembly, part of an enzyme complex containing four subunits: a flavoprotein, an iron-sulfur protein, cytochrome b-556 and a hydrophobic protein. It depends on [2Fe-2S] cluster as a cofactor. The cofactor is [3Fe-4S] cluster. [4Fe-4S] cluster serves as cofactor.

The catalysed reaction is a quinone + succinate = fumarate + a quinol. It participates in carbohydrate metabolism; tricarboxylic acid cycle; fumarate from succinate (bacterial route): step 1/1. The protein is Succinate dehydrogenase iron-sulfur subunit (sdhB) of Coxiella burnetii (strain RSA 493 / Nine Mile phase I).